A 342-amino-acid chain; its full sequence is Holliday junction branch migration complex subunit RuvB (342 aa).

The large ATPase domain (RuvB-L) stretch occupies residues Met-1–Tyr-185. Residues Leu-24, Arg-25, Gly-66, Lys-69, Thr-70, Ser-71, Glu-132–Tyr-134, Arg-175, Tyr-185, and Arg-222 contribute to the ATP site. A Mg(2+)-binding site is contributed by Thr-70. The tract at residues Gly-186 to Glu-256 is small ATPAse domain (RuvB-S). A head domain (RuvB-H) region spans residues Ala-259–Val-342. Positions 314 and 319 each coordinate DNA.

The protein belongs to the RuvB family. In terms of assembly, homohexamer. Forms an RuvA(8)-RuvB(12)-Holliday junction (HJ) complex. HJ DNA is sandwiched between 2 RuvA tetramers; dsDNA enters through RuvA and exits via RuvB. An RuvB hexamer assembles on each DNA strand where it exits the tetramer. Each RuvB hexamer is contacted by two RuvA subunits (via domain III) on 2 adjacent RuvB subunits; this complex drives branch migration. In the full resolvosome a probable DNA-RuvA(4)-RuvB(12)-RuvC(2) complex forms which resolves the HJ.

It is found in the cytoplasm. The enzyme catalyses ATP + H2O = ADP + phosphate + H(+). The RuvA-RuvB-RuvC complex processes Holliday junction (HJ) DNA during genetic recombination and DNA repair, while the RuvA-RuvB complex plays an important role in the rescue of blocked DNA replication forks via replication fork reversal (RFR). RuvA specifically binds to HJ cruciform DNA, conferring on it an open structure. The RuvB hexamer acts as an ATP-dependent pump, pulling dsDNA into and through the RuvAB complex. RuvB forms 2 homohexamers on either side of HJ DNA bound by 1 or 2 RuvA tetramers; 4 subunits per hexamer contact DNA at a time. Coordinated motions by a converter formed by DNA-disengaged RuvB subunits stimulates ATP hydrolysis and nucleotide exchange. Immobilization of the converter enables RuvB to convert the ATP-contained energy into a lever motion, pulling 2 nucleotides of DNA out of the RuvA tetramer per ATP hydrolyzed, thus driving DNA branch migration. The RuvB motors rotate together with the DNA substrate, which together with the progressing nucleotide cycle form the mechanistic basis for DNA recombination by continuous HJ branch migration. Branch migration allows RuvC to scan DNA until it finds its consensus sequence, where it cleaves and resolves cruciform DNA. The sequence is that of Holliday junction branch migration complex subunit RuvB from Anaeromyxobacter sp. (strain K).